The chain runs to 442 residues: D-serine dehydratase 2 (442 aa).

An N6-(pyridoxal phosphate)lysine modification is found at Lys-118.

Belongs to the serine/threonine dehydratase family. DsdA subfamily. As to quaternary structure, monomer. It depends on pyridoxal 5'-phosphate as a cofactor.

It catalyses the reaction D-serine = pyruvate + NH4(+). In Escherichia coli O6:K15:H31 (strain 536 / UPEC), this protein is D-serine dehydratase 2.